A 410-amino-acid polypeptide reads, in one-letter code: Dipeptidase ataJ (410 aa).

Zn(2+) is bound by residues histidine 27, aspartate 29, and glutamate 138. Substrate is bound at residue histidine 165. The segment at 180-200 (TSSPWSEYGGQTHDPGDEPSR) is disordered. Arginine 258 and aspartate 318 together coordinate substrate.

It belongs to the metallo-dependent hydrolases superfamily. Peptidase M19 family. Requires Zn(2+) as cofactor.

The enzyme catalyses an L-aminoacyl-L-amino acid + H2O = 2 an L-alpha-amino acid. It functions in the pathway mycotoxin biosynthesis. Functionally, dipeptidase; part of the gene cluster that mediates the biosynthesis of acetylaranotin, a member of the epipolythiodioxopiperazine (ETP) class of toxins characterized by a disulfide-bridged cyclic dipeptide. The first step of acetylaranotin biosynthesis is performed by the NRPS ataP which produces diketopiperazine cyclo-L-Phe-L-Phe via the condensation of 2 phenylalanines (L-Phe). The ataC domain of ataTC then catalyzes the formation of bishydroxylation of cyclo-L-Phe-L-Phe. The glutathione S-transferase domain ataG in ataIMG further catalyzes the conjugation of two glutathiones to the bishydroxylated intermediate. Next, the dipeptidase ataJ removes the Glu residues. The following step is performed by the carbon sulfur lyase domain ataI of ataIMG which may convert the bis-cysteinyl adduct to yield an epidithiol intermediate. The ataT domain from ataTC then catalyzes the oxidation of the free dithiols, followed by a cyclization step catalyzed by the cytochrome P450 ataF. AtaF probably acts as an epoxidase to promote a dual epoxidation formation at C8 and C9 along with C8' and C9', followed by the spontaneous nucleophilic attack of the amide nitrogens N10 and N10' to yield an intermediate with the pyrrolidine partial structure. The final steps of acetylaranotin biosynthesis involve the acetylation and ring rearrangement of an epitetrathiodiketopiperazine intermediate to produce acetylaranotin. AtaH probably catalyzes the acetylation of epitetrathiodiketopiperazine to produce a diacetate and ataY is responsible for the formation of the dihydrooxepin moiety that converts the diacetate intermediate to acetylaranotin via acetylapoaranotin. Both enzymes could function independently in the absence of the other. The acetylaranotin bis-thiomethyltransferase ataS located outside of acetylaranotin gene cluster is the main thiomethyltransferase responsible for converting acetylaranotin and its related intermediates to their methylated forms. This chain is Dipeptidase ataJ, found in Aspergillus terreus (strain NIH 2624 / FGSC A1156).